We begin with the raw amino-acid sequence, 662 residues long: LIM domain kinase 1 (662 aa).

2 LIM zinc-binding domains span residues 24-83 (PVCA…RFGE) and 84-145 (LCHG…MVVT). One can recognise a PDZ domain in the interval 166 to 259 (LVSIPACSDG…LLQLTIEHDP (94 aa)). Residues 262 to 328 (PLPRDLALPC…ASQRKDIGRS (67 aa)) form a disordered region. Residues 272–287 (SPLPDPHSPLRSPVPA) are compositionally biased toward pro residues. The span at 309–320 (SPGSSSVGSPAS) shows a compositional bias: low complexity. Positions 346 to 611 (LIHGEVLGKG…PSFSKLEQWL (266 aa)) constitute a Protein kinase domain. ATP contacts are provided by residues 352-360 (LGKGCFGQA) and Lys375. The active site involves Asp467.

Belongs to the protein kinase superfamily. TKL Ser/Thr protein kinase family. Expressed predominantly in the brain.

Its subcellular location is the cytoplasm. The protein resides in the nucleus. It localises to the cytoskeleton. It is found in the cell projection. The protein localises to the growth cone. The catalysed reaction is L-seryl-[protein] + ATP = O-phospho-L-seryl-[protein] + ADP + H(+). The enzyme catalyses L-threonyl-[protein] + ATP = O-phospho-L-threonyl-[protein] + ADP + H(+). Functionally, protein kinase which regulates actin filament dynamics. Phosphorylates and inactivates the actin binding/depolymerizing factor cofilin, thereby stabilizing the actin cytoskeleton. Required for motility of the axon growth cone. The chain is LIM domain kinase 1 (LIMK1) from Gallus gallus (Chicken).